The chain runs to 127 residues: Protein translocase subunit SecE (127 aa).

The next 3 helical transmembrane spans lie at 16 to 36 (AMKW…NYLY), 41 to 61 (LPLR…VALL), and 96 to 116 (IVAA…GILV).

This sequence belongs to the SecE/SEC61-gamma family. Component of the Sec protein translocase complex. Heterotrimer consisting of SecY, SecE and SecG subunits. The heterotrimers can form oligomers, although 1 heterotrimer is thought to be able to translocate proteins. Interacts with the ribosome. Interacts with SecDF, and other proteins may be involved. Interacts with SecA.

It is found in the cell inner membrane. Essential subunit of the Sec protein translocation channel SecYEG. Clamps together the 2 halves of SecY. May contact the channel plug during translocation. In Salmonella typhi, this protein is Protein translocase subunit SecE.